The following is a 444-amino-acid chain: Type VII secretion system protein EssB (444 aa).

Topologically, residues 1 to 229 (MVKNHDPKNE…RKVGHTVFKW (229 aa)) are cytoplasmic. A helical membrane pass occupies residues 230–250 (VAIGMTTLSVLLIAFLAFLYF). Topologically, residues 251–444 (SVMKHNERIE…EKRQEAERKK (194 aa)) are extracellular. The interval 366–444 (KNNGDLSNDK…EKRQEAERKK (79 aa)) is disordered. The span at 372-444 (SNDKRSEETK…EKRQEAERKK (73 aa)) shows a compositional bias: basic and acidic residues. The stretch at 387-443 (LQDILDKEKQVKDEKAKSEEEKAKAKDEKLKQQEENEKKQKEQAQKDKEKRQEAERK) forms a coiled coil.

Belongs to the EssB family.

The protein localises to the cell membrane. Functionally, component of the type VII secretion system (Ess). Required for the secretion of EsxA. This Staphylococcus aureus (strain MRSA252) protein is Type VII secretion system protein EssB.